Reading from the N-terminus, the 252-residue chain is Accessory gland protein Acp32CD (252 aa).

A signal peptide spans 1 to 19 (MWRMRMRLLTGYLVLLALG). The disordered stretch occupies residues 42 to 252 (PDGEGGTGVD…GAKEDDYEEM (211 aa)). A compositionally biased stretch (gly residues) spans 44–69 (GEGGTGVDGGGGGAGGGAAGPGGGTG). 4 stretches are compositionally biased toward basic and acidic residues: residues 104-122 (AIGK…DSKD), 142-153 (SDSKDAKDRQDK), 159-171 (QEGK…HHSS), and 209-225 (NGAR…KEVA).

Seminal fluid.

The protein localises to the secreted. Functionally, responsible for physiological and behavioral changes in mated female flies. The chain is Accessory gland protein Acp32CD (Acp32CD) from Drosophila melanogaster (Fruit fly).